A 284-amino-acid chain; its full sequence is Protein G1-like9 (284 aa).

The segment at 1–69 (MEPSPDAPRA…PAAAGLSRYE (69 aa)) is disordered. Composition is skewed to low complexity over residues 13–32 (AEEQPGPSSSASAPAPAASS) and 40–63 (QSQAQQQVQEAQPQPLAQQAPAAA). One can recognise an ALOG domain in the interval 67–194 (RYESQKRRDW…ARGIPYEKKR (128 aa)). A Nuclear localization signal motif is present at residues 192–196 (KKRKR). The tract at residues 209–284 (VAPPPVVTAP…SAAKGSATSS (76 aa)) is disordered. The span at 246-284 (TTPAASPTTPPATSVGTTTAAATAAAAKGSAAKGSATSS) shows a compositional bias: low complexity.

This sequence belongs to the plant homeotic and developmental regulators ALOG protein family.

The protein localises to the nucleus. Its function is as follows. Probable transcription regulator that acts as a developmental regulator by promoting cell growth in response to light. The sequence is that of Protein G1-like9 from Oryza sativa subsp. indica (Rice).